Reading from the N-terminus, the 165-residue chain is Large ribosomal subunit protein uL10 (165 aa).

It belongs to the universal ribosomal protein uL10 family. In terms of assembly, part of the ribosomal stalk of the 50S ribosomal subunit. The N-terminus interacts with L11 and the large rRNA to form the base of the stalk. The C-terminus forms an elongated spine to which L12 dimers bind in a sequential fashion forming a multimeric L10(L12)X complex.

In terms of biological role, forms part of the ribosomal stalk, playing a central role in the interaction of the ribosome with GTP-bound translation factors. This is Large ribosomal subunit protein uL10 from Pectobacterium carotovorum subsp. carotovorum (strain PC1).